The primary structure comprises 427 residues: 3-isopropylmalate dehydratase large subunit (427 aa).

Positions 308, 368, and 371 each coordinate [4Fe-4S] cluster.

Belongs to the aconitase/IPM isomerase family. LeuC type 2 subfamily. Heterodimer of LeuC and LeuD. It depends on [4Fe-4S] cluster as a cofactor.

The enzyme catalyses (2R,3S)-3-isopropylmalate = (2S)-2-isopropylmalate. The protein operates within amino-acid biosynthesis; L-leucine biosynthesis; L-leucine from 3-methyl-2-oxobutanoate: step 2/4. Functionally, catalyzes the isomerization between 2-isopropylmalate and 3-isopropylmalate, via the formation of 2-isopropylmaleate. This is 3-isopropylmalate dehydratase large subunit from Geobacter sulfurreducens (strain ATCC 51573 / DSM 12127 / PCA).